The primary structure comprises 188 residues: Chitin synthase 2 (188 aa).

It belongs to the chitin synthase family.

It localises to the cell membrane. It catalyses the reaction [(1-&gt;4)-N-acetyl-beta-D-glucosaminyl](n) + UDP-N-acetyl-alpha-D-glucosamine = [(1-&gt;4)-N-acetyl-beta-D-glucosaminyl](n+1) + UDP + H(+). Polymerizes chitin, a structural polymer of the cell wall and septum, by transferring the sugar moiety of UDP-GlcNAc to the non-reducing end of the growing chitin polymer. The protein is Chitin synthase 2 (CHS2) of Exophiala jeanselmei (Dematiaceous fungus).